Here is a 536-residue protein sequence, read N- to C-terminus: Phosphoenolpyruvate carboxykinase (ATP) (536 aa).

3 residues coordinate substrate: arginine 61, tyrosine 195, and lysine 201. Residues lysine 201, histidine 220, and 236-244 contribute to the ATP site; that span reads GLSGTGKTT. Lysine 201 and histidine 220 together coordinate Mn(2+). Aspartate 257 contributes to the Mn(2+) binding site. Glutamate 285, arginine 322, and threonine 447 together coordinate ATP. Arginine 322 serves as a coordination point for substrate.

It belongs to the phosphoenolpyruvate carboxykinase (ATP) family. The cofactor is Mn(2+).

The protein localises to the cytoplasm. The catalysed reaction is oxaloacetate + ATP = phosphoenolpyruvate + ADP + CO2. It functions in the pathway carbohydrate biosynthesis; gluconeogenesis. Functionally, involved in the gluconeogenesis. Catalyzes the conversion of oxaloacetate (OAA) to phosphoenolpyruvate (PEP) through direct phosphoryl transfer between the nucleoside triphosphate and OAA. The protein is Phosphoenolpyruvate carboxykinase (ATP) of Rhizobium etli (strain ATCC 51251 / DSM 11541 / JCM 21823 / NBRC 15573 / CFN 42).